The chain runs to 399 residues: Na(+)/H(+) antiporter NhaA (399 aa).

A run of 11 helical transmembrane segments spans residues 12 to 32, 60 to 80, 94 to 114, 126 to 146, 155 to 175, 178 to 198, 206 to 226, 263 to 283, 284 to 304, 336 to 356, and 372 to 392; these read LDIA…IAAN, LLLW…GLEI, LAAL…LIYA, GWAI…TLLG, IFLT…IAFF, ASLS…LIGL, LWPY…SGVH, PWVT…VSLA, GLPP…GLFL, GVAL…TLAF, and LGVL…LRLS.

It belongs to the NhaA Na(+)/H(+) (TC 2.A.33) antiporter family.

The protein resides in the cell inner membrane. It carries out the reaction Na(+)(in) + 2 H(+)(out) = Na(+)(out) + 2 H(+)(in). Functionally, na(+)/H(+) antiporter that extrudes sodium in exchange for external protons. This Rhodospirillum rubrum (strain ATCC 11170 / ATH 1.1.1 / DSM 467 / LMG 4362 / NCIMB 8255 / S1) protein is Na(+)/H(+) antiporter NhaA.